Here is a 49-residue protein sequence, read N- to C-terminus: DNA-directed RNA polymerase subunit Rpo12 (49 aa).

3 residues coordinate Zn(2+): Cys-11, Cys-27, and Cys-30.

Belongs to the archaeal Rpo12/eukaryotic RPC10 RNA polymerase subunit family. As to quaternary structure, part of the RNA polymerase complex. Zn(2+) serves as cofactor.

It is found in the cytoplasm. It carries out the reaction RNA(n) + a ribonucleoside 5'-triphosphate = RNA(n+1) + diphosphate. Its function is as follows. DNA-dependent RNA polymerase (RNAP) catalyzes the transcription of DNA into RNA using the four ribonucleoside triphosphates as substrates. This is DNA-directed RNA polymerase subunit Rpo12 from Pyrococcus abyssi (strain GE5 / Orsay).